Here is a 254-residue protein sequence, read N- to C-terminus: MEIDLNADLGEGCGSDEALLDLVTSANIACGWHAGGANAMRDCVRWAVQKGVSIGAHPSFHDPENFGRKEMQLPAGDIYAGVLYQLGALSAIAQAEGGRIAHVKPHGALYNQAARDPLIADAVVSAIHDFDPSLAVFGLANSVFVAAARHAGLAAVEEVFADRGYRADGSLVPRSQPGALIDDENAVLARTLDMVRERKVRAVSGEWVPLNAQTVCLHGDGPHALAFAKRIRTALEAAGVDVVAPGALQADEDA.

It belongs to the LamB/PxpA family. Forms a complex composed of PxpA, PxpB and PxpC.

It carries out the reaction 5-oxo-L-proline + ATP + 2 H2O = L-glutamate + ADP + phosphate + H(+). Functionally, catalyzes the cleavage of 5-oxoproline to form L-glutamate coupled to the hydrolysis of ATP to ADP and inorganic phosphate. The polypeptide is 5-oxoprolinase subunit A (Burkholderia ambifaria (strain MC40-6)).